Here is a 496-residue protein sequence, read N- to C-terminus: RNA-binding motif protein, Y chromosome, family 1 member B (496 aa).

The region spanning 8 to 85 (GKLFIGGLNR…KAIKVEQAKK (78 aa)) is the RRM domain. Disordered regions lie at residues 67–349 (DMNG…HRDY) and 452–496 (KDQR…SSRY). Low complexity-rich tracts occupy residues 97–114 (PASS…SARG) and 149–159 (PVKRGPSSRSG). Positions 175–184 (NSWMGSQGPM) are enriched in polar residues. 6 stretches are compositionally biased toward basic and acidic residues: residues 204-214 (RNDRMSTRHDG), 242-253 (DNGHSNRDEHSS), 276-289 (AYRD…DESY), 313-326 (GYRD…HESY), 335-349 (SSRE…HRDY), and 484-496 (GESR…SSRY).

As to quaternary structure, interacts with splicing factor proteins SFRS3/SRP20, TRA2B/SFRS10, KHDRBS1/SAM68 and KHDRBS3. Testis-specific.

It localises to the nucleus. In terms of biological role, RNA-binding protein which may be involved in spermatogenesis. Required for sperm development, possibly by participating in pre-mRNA splicing in the testis. In Homo sapiens (Human), this protein is RNA-binding motif protein, Y chromosome, family 1 member B (RBMY1B).